The sequence spans 576 residues: Arginine--tRNA ligase (576 aa).

The 'HIGH' region signature appears at 126–136; the sequence is ANPTGPMHIGH.

This sequence belongs to the class-I aminoacyl-tRNA synthetase family. In terms of assembly, monomer.

It is found in the cytoplasm. It carries out the reaction tRNA(Arg) + L-arginine + ATP = L-arginyl-tRNA(Arg) + AMP + diphosphate. The polypeptide is Arginine--tRNA ligase (Rickettsia africae (strain ESF-5)).